The following is a 794-amino-acid chain: Protein argonaute-4 (794 aa).

The region spanning 152 to 271 (PIIEFMCEVL…LPLEVCNIVA (120 aa)) is the PAZ domain. In terms of domain architecture, Piwi spans 442 to 753 (LIVVILPGKT…VAFRARYHLV (312 aa)). The segment at 758–779 (DSAEGSHVSGQSNGRDPQALAK) is disordered.

Belongs to the argonaute family. Ago subfamily.

It is found in the cytoplasm. The protein resides in the P-body. In terms of biological role, required for RNA-mediated gene silencing (RNAi). Binds to short RNAs such as microRNAs (miRNAs) and represses the translation of mRNAs which are complementary to them. Lacks endonuclease activity and does not appear to cleave target mRNAs. The sequence is that of Protein argonaute-4 (AGO4) from Gallus gallus (Chicken).